The following is a 147-amino-acid chain: Probable disulfide formation protein (147 aa).

Residues 9-28 traverse the membrane as a helical segment; the sequence is NYSLYFAWLTALIATLGSLY. Cysteine 38 and cysteine 41 form a disulfide bridge. The next 2 membrane-spanning stretches (helical) occupy residues 43–62 and 69–86; these read YQRV…AYRT and YALP…YQYL. Cysteine 99 and cysteine 106 are joined by a disulfide. A helical transmembrane segment spans residues 115-138; the sequence is GFITLPFLGMLATLIMSFFLIMAF.

The protein belongs to the DsbB family. BdbC subfamily.

It localises to the cell inner membrane. Its function is as follows. Required for disulfide bond formation in some proteins. This Coxiella burnetii (strain CbuK_Q154) (Coxiella burnetii (strain Q154)) protein is Probable disulfide formation protein.